The primary structure comprises 116 residues: Large ribosomal subunit protein bL19 (116 aa).

This sequence belongs to the bacterial ribosomal protein bL19 family.

Functionally, this protein is located at the 30S-50S ribosomal subunit interface and may play a role in the structure and function of the aminoacyl-tRNA binding site. This Pseudomonas savastanoi pv. phaseolicola (strain 1448A / Race 6) (Pseudomonas syringae pv. phaseolicola (strain 1448A / Race 6)) protein is Large ribosomal subunit protein bL19.